A 561-amino-acid polypeptide reads, in one-letter code: 4-coumarate--CoA ligase 1 (561 aa).

ATP is bound by residues Ser-210, Ser-211, Gly-212, Thr-213, Thr-214, and Lys-218. Residues Tyr-260 and Ser-264 each contribute to the (E)-4-coumaroyl-AMP site. Lys-281 serves as a coordination point for CoA. The SBD1 stretch occupies residues 283–352 (EINLLLELIQ…AKFPNAKLGQ (70 aa)). Ala-330, Gln-352, Gly-353, Thr-357, and Met-365 together coordinate (E)-4-coumaroyl-AMP. Gln-352, Gly-353, and Thr-357 together coordinate ATP. Positions 353–420 (GYGMTEAGPV…IRGHQIMKGY (68 aa)) are SBD2. Asp-441 and Arg-456 together coordinate ATP. The (E)-4-coumaroyl-AMP site is built by Lys-458 and Lys-462. 2 residues coordinate CoA: Lys-464 and Gly-465. An ATP-binding site is contributed by Lys-547.

Belongs to the ATP-dependent AMP-binding enzyme family. Requires Mg(2+) as cofactor. Preferentially expressed in roots, bolting stems and siliques. Also detected in leaves.

The catalysed reaction is (E)-4-coumarate + ATP + CoA = (E)-4-coumaroyl-CoA + AMP + diphosphate. The enzyme catalyses (E)-caffeate + ATP + CoA = (E)-caffeoyl-CoA + AMP + diphosphate. It catalyses the reaction (E)-ferulate + ATP + CoA = (E)-feruloyl-CoA + AMP + diphosphate. It carries out the reaction (E)-4-coumarate + ATP + H(+) = (E)-4-coumaroyl-AMP + diphosphate. The catalysed reaction is (E)-4-coumaroyl-AMP + CoA = (E)-4-coumaroyl-CoA + AMP + H(+). The enzyme catalyses (E)-caffeate + ATP + H(+) = (E)-caffeoyl-AMP + diphosphate. It catalyses the reaction (E)-caffeoyl-AMP + CoA = (E)-caffeoyl-CoA + AMP + H(+). It carries out the reaction (E)-ferulate + ATP + H(+) = (E)-feruloyl-AMP + diphosphate. The catalysed reaction is (E)-feruloyl-AMP + CoA = (E)-feruloyl-CoA + AMP + H(+). It functions in the pathway phytoalexin biosynthesis; 3,4',5-trihydroxystilbene biosynthesis; 3,4',5-trihydroxystilbene from trans-4-coumarate: step 1/2. Functionally, produces CoA thioesters of a variety of hydroxy- and methoxy-substituted cinnamic acids, which are used to synthesize several phenylpropanoid-derived compounds, including anthocyanins, flavonoids, isoflavonoids, coumarins, lignin, suberin and wall-bound phenolics. Follows a two-step reaction mechanism, wherein the carboxylate substrate first undergoes adenylation by ATP, followed by a thioesterification in the presence of CoA to yield the final CoA thioesters. In Arabidopsis thaliana (Mouse-ear cress), this protein is 4-coumarate--CoA ligase 1.